A 124-amino-acid polypeptide reads, in one-letter code: Fluoride-specific ion channel FluC (124 aa).

4 helical membrane passes run 4–24 (IVLL…LAGL), 35–55 (LGTF…WGVC), 67–87 (VVLL…TFES), and 96–116 (WLAF…LLWL). Na(+) is bound by residues Gly-75 and Thr-78.

This sequence belongs to the fluoride channel Fluc/FEX (TC 1.A.43) family.

It localises to the cell inner membrane. The catalysed reaction is fluoride(in) = fluoride(out). With respect to regulation, na(+) is not transported, but it plays an essential structural role and its presence is essential for fluoride channel function. In terms of biological role, fluoride-specific ion channel. Important for reducing fluoride concentration in the cell, thus reducing its toxicity. The chain is Fluoride-specific ion channel FluC from Nitratidesulfovibrio vulgaris (strain DSM 19637 / Miyazaki F) (Desulfovibrio vulgaris).